Here is a 269-residue protein sequence, read N- to C-terminus: Chymotrypsin-like elastase family member 2A (269 aa).

A signal peptide spans 1-16 (MIRTLLLSTLVAGALS). Residues 17–28 (CGDPTYPPYVTR) constitute a propeptide, activation peptide. The Peptidase S1 domain maps to 29–267 (VVGGEEARPN…YIDWINSVIA (239 aa)). Cys58 and Cys74 form a disulfide bridge. Active-site charge relay system residues include His73 and Asp121. 3 disulfides stabilise this stretch: Cys155–Cys222, Cys186–Cys202, and Cys212–Cys243. The Charge relay system role is filled by Ser216.

It belongs to the peptidase S1 family. Elastase subfamily. As to quaternary structure, interacts with CPA1. Interacts with SERPINA1. In terms of tissue distribution, expressed in pancreas. Not detected in keratinocytes. Detected in exocrine secretions of the pancreas (at protein level). Also expressed in a small fraction of cells in pancreatic islets, adrenal cortex, intestinal glands and colonic lymphoid follicles (at protein level). Detected in plasma.

It is found in the secreted. The catalysed reaction is Preferential cleavage: Leu-|-Xaa, Met-|-Xaa and Phe-|-Xaa. Hydrolyzes elastin.. Functionally, elastase that enhances insulin signaling and might have a physiologic role in cellular glucose metabolism. Circulates in plasma and reduces platelet hyperactivation, triggers both insulin secretion and degradation, and increases insulin sensitivity. The chain is Chymotrypsin-like elastase family member 2A from Homo sapiens (Human).